We begin with the raw amino-acid sequence, 485 residues long: Glutamate--tRNA ligase (485 aa).

Positions 11–21 (PSPTGLLHIGN) match the 'HIGH' region motif. Positions 255–259 (KLSKR) match the 'KMSKS' region motif. An ATP-binding site is contributed by Lys258.

This sequence belongs to the class-I aminoacyl-tRNA synthetase family. Glutamate--tRNA ligase type 1 subfamily. As to quaternary structure, monomer.

It is found in the cytoplasm. The enzyme catalyses tRNA(Glu) + L-glutamate + ATP = L-glutamyl-tRNA(Glu) + AMP + diphosphate. In terms of biological role, catalyzes the attachment of glutamate to tRNA(Glu) in a two-step reaction: glutamate is first activated by ATP to form Glu-AMP and then transferred to the acceptor end of tRNA(Glu). The polypeptide is Glutamate--tRNA ligase (Streptococcus sanguinis (strain SK36)).